The chain runs to 654 residues: RING finger protein 112 (654 aa).

An RING-type zinc finger spans residues 80 to 121 (CSICLERLREPISLDCGHDFCIRCFSTHRIPGCELPCCPECR). The interval 154–654 (AVRAERLLLV…GDREPLLQEE (501 aa)) is interaction with ZBTB16. One can recognise a GB1/RHD3-type G domain in the interval 189 to 420 (DTPVCLLAVL…YILDVLSTAP (232 aa)). 340 to 341 (RD) is a GTP binding site. A run of 2 helical transmembrane segments spans residues 570–590 (LAAV…GVVG) and 603–623 (GMVA…GGGV).

It belongs to the TRAFAC class dynamin-like GTPase superfamily. GB1/RHD3 GTPase family. GB1 subfamily. In terms of assembly, self-associates. Interacts with SP1 in an oxidative stress-regulated manner. Interacts with SIGMAR1 in an oxidative stress-regulated manner. Interacts with ZBTB16 (via C2H2-type zinc finger domains 1 and 2). Auto-ubiquitinated. Expressed in most of the brain areas, including cortex, striatum, hippocampus, thalamus, and cerebellum (at protein level). Expressed in lateral amygdaloid nucleus, and ventromedial hypothalamus. Also expressed strongly in the marginal zone of brain vesicles, optic stalk, and cartilage primordium.

It is found in the membrane. The protein localises to the cytoplasm. The protein resides in the nucleus. Its subcellular location is the nuclear body. It localises to the nucleoplasm. It is found in the endosome. The protein localises to the cytoplasmic vesicle. The protein resides in the secretory vesicle. Its subcellular location is the synaptic vesicle. It localises to the postsynaptic density. It is found in the perikaryon. The protein localises to the cell projection. The protein resides in the neuron projection. It carries out the reaction S-ubiquitinyl-[E2 ubiquitin-conjugating enzyme]-L-cysteine + [acceptor protein]-L-lysine = [E2 ubiquitin-conjugating enzyme]-L-cysteine + N(6)-ubiquitinyl-[acceptor protein]-L-lysine.. Its pathway is protein modification; protein ubiquitination. In terms of biological role, E3 ubiquitin-protein ligase that plays an important role in neuronal differentiation, including neurogenesis and gliogenesis, during brain development. During embryonic development initiates neuronal differentiation by inducing cell cycle arrest at the G0/G1 phase through up-regulation of cell-cycle regulatory proteins. Plays a role not only in the fetal period during the development of the nervous system, but also in the adult brain, where it is involved in the maintenance of neural functions and protection of the nervous tissue cells from oxidative stress-induced damage. Exhibits GTPase and E3 ubiquitin-protein ligase activities. Regulates dendritic spine density and synaptic neurotransmission; its ability to hydrolyze GTP is involved in the maintenance of dendritic spine density. The chain is RING finger protein 112 (Rnf112) from Mus musculus (Mouse).